Consider the following 158-residue polypeptide: ATP synthase subunit b' (158 aa).

The chain crosses the membrane as a helical span at residues 24–44 (ATLPLMAVQILVLVFLLNAVF).

Belongs to the ATPase B chain family. As to quaternary structure, F-type ATPases have 2 components, F(1) - the catalytic core - and F(0) - the membrane proton channel. F(1) has five subunits: alpha(3), beta(3), gamma(1), delta(1), epsilon(1). F(0) has four main subunits: a(1), b(1), b'(1) and c(10-14). The alpha and beta chains form an alternating ring which encloses part of the gamma chain. F(1) is attached to F(0) by a central stalk formed by the gamma and epsilon chains, while a peripheral stalk is formed by the delta, b and b' chains.

It localises to the cellular thylakoid membrane. Functionally, f(1)F(0) ATP synthase produces ATP from ADP in the presence of a proton or sodium gradient. F-type ATPases consist of two structural domains, F(1) containing the extramembraneous catalytic core and F(0) containing the membrane proton channel, linked together by a central stalk and a peripheral stalk. During catalysis, ATP synthesis in the catalytic domain of F(1) is coupled via a rotary mechanism of the central stalk subunits to proton translocation. Its function is as follows. Component of the F(0) channel, it forms part of the peripheral stalk, linking F(1) to F(0). The b'-subunit is a diverged and duplicated form of b found in plants and photosynthetic bacteria. The sequence is that of ATP synthase subunit b' from Synechococcus elongatus (strain ATCC 33912 / PCC 7942 / FACHB-805) (Anacystis nidulans R2).